The chain runs to 188 residues: dCTP deaminase (188 aa).

DCTP contacts are provided by residues 111–116 (KSTYAR), 135–137 (TLE), Q156, Y170, and Q180. The active-site Proton donor/acceptor is E137.

This sequence belongs to the dCTP deaminase family. Homotrimer.

The catalysed reaction is dCTP + H2O + H(+) = dUTP + NH4(+). It participates in pyrimidine metabolism; dUMP biosynthesis; dUMP from dCTP (dUTP route): step 1/2. Its function is as follows. Catalyzes the deamination of dCTP to dUTP. The polypeptide is dCTP deaminase (Neisseria meningitidis serogroup B (strain ATCC BAA-335 / MC58)).